The sequence spans 141 residues: Antifungal protein ginkbilobin-like protein 1 (141 aa).

An N-terminal signal peptide occupies residues 1-32; that stretch reads MSISSKFQLRSSTSLLLLVALMVVMGMDGAAA. The Gnk2-homologous domain occupies 36-141; it reads TNFVSSACNT…CFIQYEQHSF (106 aa). Intrachain disulfides connect Cys-43/Cys-119, Cys-95/Cys-104, and Cys-107/Cys-132. Asn-44 contacts alpha-D-mannopyranose. Positions 126 and 137 each coordinate alpha-D-mannopyranose.

Functionally, exerts antifungal activity through its carbohydrate-binding specificity. The sequence is that of Antifungal protein ginkbilobin-like protein 1 from Picea glauca (White spruce).